We begin with the raw amino-acid sequence, 86 residues long: Acyl carrier protein (86 aa).

The Carrier domain occupies Ser-7–Lys-85. Ser-45 carries the O-(pantetheine 4'-phosphoryl)serine modification.

This sequence belongs to the acyl carrier protein (ACP) family. 4'-phosphopantetheine is transferred from CoA to a specific serine of apo-ACP by AcpS. This modification is essential for activity because fatty acids are bound in thioester linkage to the sulfhydryl of the prosthetic group.

It localises to the cytoplasm. The protein operates within lipid metabolism; fatty acid biosynthesis. Its function is as follows. Carrier of the growing fatty acid chain in fatty acid biosynthesis. The protein is Acyl carrier protein of Rickettsia bellii (strain RML369-C).